The following is a 92-amino-acid chain: N(2)-fixation sustaining protein CowN (92 aa).

The protein belongs to the CowN family.

In terms of biological role, is required to sustain N(2)-dependent growth in the presence of low levels of carbon monoxide (CO). Probably acts by protecting the N(2) fixation ability of the nitrogenase complex, which is inactivated in the presence of CO. This is N(2)-fixation sustaining protein CowN from Cereibacter sphaeroides (strain ATCC 17025 / ATH 2.4.3) (Rhodobacter sphaeroides).